The chain runs to 270 residues: L-cystine-binding protein TcyK (270 aa).

The signal sequence occupies residues 1–20; that stretch reads MKTKTAFMAILFSLITVLSA. Cys-21 carries N-palmitoyl cysteine lipidation. A lipid anchor (S-diacylglycerol cysteine) is attached at Cys-21.

Belongs to the bacterial solute-binding protein 3 family. The complex is composed of two ATP-binding proteins (TcyN), two transmembrane proteins (TcyL and TcyM) and two solute-binding proteins (TcyJ and TcyK).

It is found in the cell membrane. Its function is as follows. Part of the ABC transporter complex TcyJKLMN involved in L-cystine import. Is also involved in cystathionine, djenkolate, and S-methylcysteine transport. This is L-cystine-binding protein TcyK (tcyK) from Bacillus subtilis (strain 168).